The primary structure comprises 844 residues: Penicillin-binding protein 1B (844 aa).

Residues 1–10 (MAGNDREPIG) show a composition bias toward basic and acidic residues. The tract at residues 1-60 (MAGNDREPIGRKGKPTRPVKQKVSRRRYEDDDDYDDYDDYEDEEPMPRKGKGKGKGRKPR) is disordered. At 1 to 63 (MAGNDREPIG…GKGRKPRGKR (63 aa)) the chain is on the cytoplasmic side. Positions 11–25 (RKGKPTRPVKQKVSR) are enriched in basic residues. Acidic residues predominate over residues 30 to 44 (DDDDYDDYDDYEDEE). Residues 48-60 (RKGKGKGKGRKPR) show a composition bias toward basic residues. A helical; Signal-anchor for type II membrane protein transmembrane segment spans residues 64-87 (GWLWLLLKLAIVFAVLIAIYGVYL). The tract at residues 88 to 250 (DQKIRSRIDG…DGISLYSIGR (163 aa)) is membrane association. Residues 88–844 (DQKIRSRIDG…GWIKDMFGSN (757 aa)) lie on the Periplasmic side of the membrane. The uvrB domain 2 homolog stretch occupies residues 109–200 (RMVNLEPDMT…QFGFFRLDPR (92 aa)). Residues 195-367 (FRLDPRLITM…SIYNPWRNPK (173 aa)) form a transglycosylase region. The Proton donor; for transglycosylase activity role is filled by Glu233. The segment at 444–736 (SVAQDAAEKA…NNQPTKLYGA (293 aa)) is transpeptidase. The Acyl-ester intermediate; for transpeptidase activity role is filled by Ser510. Low complexity predominate over residues 793 to 825 (LCQQSEMQQQPSGNPFDQSSQPQQQPQQQPAQQ). Residues 793 to 835 (LCQQSEMQQQPSGNPFDQSSQPQQQPQQQPAQQEQKDSDGVAG) are disordered.

This sequence in the N-terminal section; belongs to the glycosyltransferase 51 family. The protein in the C-terminal section; belongs to the transpeptidase family. Forms a trimeric complex with MipA and MltA. Has also been shown to exist as monomer or homodimer; homodimer of Alpha and Gamma isozymes can be found. Interacts with UvrA, FtsL and FtsN.

It is found in the cell inner membrane. The enzyme catalyses [GlcNAc-(1-&gt;4)-Mur2Ac(oyl-L-Ala-gamma-D-Glu-L-Lys-D-Ala-D-Ala)](n)-di-trans,octa-cis-undecaprenyl diphosphate + beta-D-GlcNAc-(1-&gt;4)-Mur2Ac(oyl-L-Ala-gamma-D-Glu-L-Lys-D-Ala-D-Ala)-di-trans,octa-cis-undecaprenyl diphosphate = [GlcNAc-(1-&gt;4)-Mur2Ac(oyl-L-Ala-gamma-D-Glu-L-Lys-D-Ala-D-Ala)](n+1)-di-trans,octa-cis-undecaprenyl diphosphate + di-trans,octa-cis-undecaprenyl diphosphate + H(+). It catalyses the reaction Preferential cleavage: (Ac)2-L-Lys-D-Ala-|-D-Ala. Also transpeptidation of peptidyl-alanyl moieties that are N-acyl substituents of D-alanine.. It functions in the pathway cell wall biogenesis; peptidoglycan biosynthesis. Cell wall formation. Synthesis of cross-linked peptidoglycan from the lipid intermediates. The enzyme has a penicillin-insensitive transglycosylase N-terminal domain (formation of linear glycan strands) and a penicillin-sensitive transpeptidase C-terminal domain (cross-linking of the peptide subunits). The chain is Penicillin-binding protein 1B (mrcB) from Escherichia coli (strain K12).